The sequence spans 247 residues: MSGKDRIEIFPSRMAQTIMKARLKGAQTGRNLLKKKSDALTLRFRQILKKIIETKMLMGEVMREAAFSLAEAKFTAGDFSTTVIQNVNKAQVKIRAKKDNVAGVTLPVFEHYHEGTDSYELTGLARGGEQLAKLKRNYAKAVELLVELASLQTSFVTLDEAIKITNRRVNAIEHVIIPRIERTLAYIITELDEREREEFYRLKKIQEKKKILKEKSEKDLEQRRAAGEVLEPANLLAEEKDEDLLFE.

It belongs to the V-ATPase D subunit family. V-ATPase is a heteromultimeric enzyme made up of two complexes: the ATP-hydrolytic V1 complex and the proton translocation V0 complex. The V1 complex consists of three catalytic AB heterodimers that form a heterohexamer, three peripheral stalks each consisting of EG heterodimers, one central rotor including subunits D and F, and the regulatory subunits C and H. The proton translocation complex V0 consists of the proton transport subunit a, a ring of proteolipid subunits c9c'', rotary subunit d, subunits e and f, and the accessory subunits ATP6AP1/Ac45 and ATP6AP2/PRR. Interacts with SNX10.

It is found in the membrane. The protein localises to the cytoplasmic vesicle. It localises to the clathrin-coated vesicle membrane. Its subcellular location is the cytoplasm. The protein resides in the cytoskeleton. It is found in the microtubule organizing center. The protein localises to the centrosome. It localises to the cell projection. Its subcellular location is the cilium. Subunit of the V1 complex of vacuolar(H+)-ATPase (V-ATPase), a multisubunit enzyme composed of a peripheral complex (V1) that hydrolyzes ATP and a membrane integral complex (V0) that translocates protons. V-ATPase is responsible for acidifying and maintaining the pH of intracellular compartments and in some cell types, is targeted to the plasma membrane, where it is responsible for acidifying the extracellular environment. May play a role in cilium biogenesis through regulation of the transport and the localization of proteins to the cilium. This Homo sapiens (Human) protein is V-type proton ATPase subunit D (ATP6V1D).